The primary structure comprises 339 residues: RNA polymerase principal sigma factor HrdC (339 aa).

The segment covering Met-1 to Ala-10 has biased composition (low complexity). Disordered stretches follow at residues Met-1–Asp-37 and Arg-71–Glu-101. A compositionally biased stretch (basic and acidic residues) spans Thr-91–Glu-101. The Polymerase core binding motif lies at Asp-130–Val-143. Residues Leu-300–Lys-319 constitute a DNA-binding region (H-T-H motif).

The protein belongs to the sigma-70 factor family. In terms of assembly, interacts transiently with the RNA polymerase catalytic core.

Functionally, sigma factors are initiation factors that promote the attachment of RNA polymerase to specific initiation sites and are then released. This is RNA polymerase principal sigma factor HrdC (hrdC) from Streptomyces coelicolor (strain ATCC BAA-471 / A3(2) / M145).